Consider the following 113-residue polypeptide: Large ribosomal subunit protein uL22 (113 aa).

The protein belongs to the universal ribosomal protein uL22 family. Part of the 50S ribosomal subunit.

Its function is as follows. This protein binds specifically to 23S rRNA; its binding is stimulated by other ribosomal proteins, e.g. L4, L17, and L20. It is important during the early stages of 50S assembly. It makes multiple contacts with different domains of the 23S rRNA in the assembled 50S subunit and ribosome. The globular domain of the protein is located near the polypeptide exit tunnel on the outside of the subunit, while an extended beta-hairpin is found that lines the wall of the exit tunnel in the center of the 70S ribosome. The sequence is that of Large ribosomal subunit protein uL22 from Herpetosiphon aurantiacus (strain ATCC 23779 / DSM 785 / 114-95).